The following is a 144-amino-acid chain: Small ribosomal subunit protein eS12z (144 aa).

The residue at position 2 (Ser2) is an N-acetylserine.

The protein belongs to the eukaryotic ribosomal protein eS12 family.

This is Small ribosomal subunit protein eS12z (RPS12A) from Arabidopsis thaliana (Mouse-ear cress).